The following is a 312-amino-acid chain: Taste receptor type 2 member 135 (312 aa).

Residues 1–19 lie on the Extracellular side of the membrane; the sequence is MSTGHTVLGCQTTDKTVVT. Residues 20 to 40 form a helical membrane-spanning segment; it reads LFIILVLLCLVAVVGNGFIII. Residues 41 to 66 lie on the Cytoplasmic side of the membrane; it reads ALGMKWLLRRTLSAHNKLLISLAASR. Residues 67-87 traverse the membrane as a helical segment; the sequence is FCLQCVVIGKNIYVFLNPTSF. Residues 88–97 are Extracellular-facing; that stretch reads PYNPVIQLLN. Residues 98–118 form a helical membrane-spanning segment; it reads LMWDFLTAATIWLCSLLGFFY. Residues 119–140 lie on the Cytoplasmic side of the membrane; that stretch reads CVKIATLTHPVFVWLKYRLPGW. Residues 141 to 161 traverse the membrane as a helical segment; it reads VPWMLLSAVGMSSLTSILCFI. The Extracellular segment spans residues 162–198; the sequence is GNYMIYQNHAKSGHQPWNVTGNSLRHSLEKFYFFSIK. Asn-179 carries an N-linked (GlcNAc...) asparagine glycan. Residues 199 to 219 form a helical membrane-spanning segment; sequence IIMWTIPTVVFSIFMSLLLVS. The Cytoplasmic portion of the chain corresponds to 220–244; the sequence is LVRHMKKTFLALSELRDVWAQAHFK. A helical transmembrane segment spans residues 245 to 265; sequence ALLPLLSFIVLFISCFLTLVL. The Extracellular segment spans residues 266–277; sequence SSASNTPYQEFR. A helical membrane pass occupies residues 278–298; sequence YWMWQVVIHLCTVIHPIVILF. Residues 299 to 312 are Cytoplasmic-facing; the sequence is SNPVLRVVIKRGCC.

This sequence belongs to the G-protein coupled receptor T2R family.

It is found in the membrane. Putative taste receptor which may play a role in the perception of bitterness. The protein is Taste receptor type 2 member 135 (Tas2r135) of Mus musculus (Mouse).